The chain runs to 66 residues: MPKLKNHSGSKKRFKFTASGLVKAQAAGKRHGMSKRPQKMKRNARGTFVMFKADGEKIAENFLRVK.

The tract at residues 25-45 (QAAGKRHGMSKRPQKMKRNAR) is disordered. The segment covering 28-44 (GKRHGMSKRPQKMKRNA) has biased composition (basic residues).

This sequence belongs to the bacterial ribosomal protein bL35 family.

The polypeptide is Large ribosomal subunit protein bL35 (Rhodospirillum centenum (strain ATCC 51521 / SW)).